Reading from the N-terminus, the 167-residue chain is MCSDFEEETSIQKFKRRLKEEPLIPLGCAATCYALYRAYRSGKAKDSVEMNRMFRARIYAQFFTLLAVVAGGMYYKTERKQRREFEKKVEERKAQEKRDAWLRELEARDKEDKGWKERHAAVSVTAKKETEGAVDKNVNQAPTEEVVEKRGTGILDAVKALVQGKKD.

The region spanning 1 to 86 is the HIG1 domain; sequence MCSDFEEETS…TERKQRREFE (86 aa). Helical transmembrane passes span 21–38 and 53–75; these read EPLI…LYRA and MFRA…GMYY. Residues 75–107 are a coiled coil; sequence YKTERKQRREFEKKVEERKAQEKRDAWLRELEA.

Belongs to the RCF1 family. As to quaternary structure, associates with the respiratory chain complex III/complex IV supercomplex.

Its subcellular location is the mitochondrion membrane. Cytochrome c oxidase subunit which plays a role in assembly of respiratory supercomplexes. This chain is Respiratory supercomplex factor 1-A, mitochondrial (rcf1-A), found in Talaromyces marneffei (strain ATCC 18224 / CBS 334.59 / QM 7333) (Penicillium marneffei).